Here is a 1309-residue protein sequence, read N- to C-terminus: Lysine-specific demethylase 2B (1309 aa).

Position 26 is a phosphoserine (Ser26). The JmjC domain occupies 147–315 (FSHTKLEHLV…MQLRIYEIED (169 aa)). A substrate-binding site is contributed by Thr208. The Fe cation site is built by His211 and Asp213. Lys228 is a binding site for substrate. His283 lines the Fe cation pocket. The span at 378-403 (DMEEESCEQQPQEEEEEEEDKEEEGD) shows a compositional bias: acidic residues. A disordered region spans residues 378–476 (DMEEESCEQQ…PTGSPATEVS (99 aa)). Over residues 404–413 (GADKTPKPPT) the composition is skewed to basic and acidic residues. Residues 415 to 424 (DPTSPTSTPP) are compositionally biased toward low complexity. Phosphoserine is present on residues Ser447 and Ser450. The residue at position 466 (Thr466) is a Phosphothreonine. Over residues 467–476 (PTGSPATEVS) the composition is skewed to polar residues. Ser470 carries the phosphoserine modification. The CXXC-type zinc-finger motif lies at 579–625 (ARRRRTRCRKCEACLRTECGECHFCKDMKKFGGPGRMKQSCIMRQCI). Cys586, Cys589, Cys592, Cys597, Cys600, Cys603, Cys619, Cys624, Cys635, Cys638, Cys661, Cys664, His669, Cys672, Cys692, and Cys695 together coordinate Zn(2+). The segment at 632–698 (TAVCLVCGEA…CWECPKCNHA (67 aa)) adopts a PHD-type zinc-finger fold. 2 disordered regions span residues 700-816 (KTGK…SLSP) and 828-1005 (QLKP…SASP). The segment covering 722–772 (KEQKMNRDNKEGQEPAKRRSECEEAPRRRSDEHPKKVPADGILRRKSDDVH) has biased composition (basic and acidic residues). The segment covering 792-816 (SSLQTSPGSSSHLSPRPPLGSSLSP) has biased composition (low complexity). Glycyl lysine isopeptide (Lys-Gly) (interchain with G-Cter in SUMO2) cross-links involve residues Lys830 and Lys863. The segment covering 883-892 (SRSSSPTAGP) has biased composition (polar residues). Over residues 905–914 (KVKMRRKRRL) the composition is skewed to basic residues. Over residues 915–933 (VNKELSKELSKELNHEIQK) the composition is skewed to basic and acidic residues. Positions 916–944 (NKELSKELSKELNHEIQKTESTLAHESQQ) form a coiled coil. Phosphoserine is present on Ser924. The span at 934–946 (TESTLAHESQQPI) shows a compositional bias: polar residues. A phosphoserine mark is found at Ser948 and Ser952. The span at 955-968 (DEPKRPLSHCERPH) shows a compositional bias: basic and acidic residues. Ser991 and Ser1004 each carry phosphoserine. Residues 1032 to 1078 (DGAAHVMHREVWMAVFSYLSHRDLCVCMRVCRTWNRWCCDKRLWTRI) form the F-box domain. 6 LRR repeats span residues 1106-1127 (WTNISKKQLSWLINRLPGLRDL), 1129-1155 (LSGCSWIAVSALCSSSCPLLRTLDVQW), 1195-1220 (GLDITDVSLRLIIRHMPLLSKLQLSY), 1221-1250 (CNHINDQSINLLTAVGTTTRDSLTEVNLSD), 1251-1275 (CNKVTDLCLSFFKRCGNICHIDLRY), and 1276-1309 (CKQVTKEGCEQFIAEMSVSVQFGQVEEKLLQKLS).

Belongs to the JHDM1 histone demethylase family. Interacts with SKP1, forming heterodimers. The KDM2B-SKP1 heterodimeric complex interacts with the PCGF1-BCORL heterodimeric complex to form a homotetrameric polycomb repression complex 1 (PRC1.1). Directly interacts with CUL1. The SKP1-KDM2B interacts with UBB. Requires Fe(2+) as cofactor.

The protein resides in the nucleus. The protein localises to the nucleolus. It localises to the chromosome. It catalyses the reaction N(6),N(6)-dimethyl-L-lysyl(36)-[histone H3] + 2 2-oxoglutarate + 2 O2 = L-lysyl(36)-[histone H3] + 2 formaldehyde + 2 succinate + 2 CO2. With respect to regulation, histone demethylase activity is inhibited by fumarate. In terms of biological role, histone demethylase that demethylates 'Lys-4' and 'Lys-36' of histone H3, thereby playing a central role in histone code. Preferentially demethylates trimethylated H3 'Lys-4' and dimethylated H3 'Lys-36' residue while it has weak or no activity for mono- and tri-methylated H3 'Lys-36'. Preferentially binds the transcribed region of ribosomal RNA and represses the transcription of ribosomal RNA genes which inhibits cell growth and proliferation. May also serve as a substrate-recognition component of the SCF (SKP1-CUL1-F-box protein)-type E3 ubiquitin ligase complex. The sequence is that of Lysine-specific demethylase 2B (Kdm2b) from Mus musculus (Mouse).